A 149-amino-acid polypeptide reads, in one-letter code: Macrodomain Ter protein (149 aa).

It belongs to the MatP family. As to quaternary structure, homodimer.

Its subcellular location is the cytoplasm. Required for spatial organization of the terminus region of the chromosome (Ter macrodomain) during the cell cycle. Prevents early segregation of duplicated Ter macrodomains during cell division. Binds specifically to matS, which is a 13 bp signature motif repeated within the Ter macrodomain. The polypeptide is Macrodomain Ter protein (Vibrio campbellii (strain ATCC BAA-1116)).